The chain runs to 432 residues: Phosphomethylpyrimidine synthase (432 aa).

Substrate contacts are provided by residues N66, M95, Y124, H163, 185–187 (SRG), 226–229 (DGLR), and E265. H269 contacts Zn(2+). Y292 contributes to the substrate binding site. Zn(2+) is bound at residue H333. 3 residues coordinate [4Fe-4S] cluster: C409, C412, and C416.

Belongs to the ThiC family. [4Fe-4S] cluster serves as cofactor.

It catalyses the reaction 5-amino-1-(5-phospho-beta-D-ribosyl)imidazole + S-adenosyl-L-methionine = 4-amino-2-methyl-5-(phosphooxymethyl)pyrimidine + CO + 5'-deoxyadenosine + formate + L-methionine + 3 H(+). Its pathway is cofactor biosynthesis; thiamine diphosphate biosynthesis. Catalyzes the synthesis of the hydroxymethylpyrimidine phosphate (HMP-P) moiety of thiamine from aminoimidazole ribotide (AIR) in a radical S-adenosyl-L-methionine (SAM)-dependent reaction. The protein is Phosphomethylpyrimidine synthase of Desulfitobacterium hafniense (strain DSM 10664 / DCB-2).